Here is a 542-residue protein sequence, read N- to C-terminus: CTP synthase (542 aa).

Residues 1–265 (MARYVFITGG…DSEVLSAFGI (265 aa)) are amidoligase domain. S13 contacts CTP. S13 provides a ligand contact to UTP. 14–19 (SLGKGI) is an ATP binding site. An L-glutamine-binding site is contributed by Y54. ATP is bound at residue D71. Mg(2+) is bound by residues D71 and E139. CTP-binding positions include 146–148 (DIE), 186–191 (KTKPTQ), and K222. UTP-binding positions include 186–191 (KTKPTQ) and K222. Residues 291 to 541 (TIAVVGKYTG…IEAAIEQSRL (251 aa)) form the Glutamine amidotransferase type-1 domain. G353 lines the L-glutamine pocket. The active-site Nucleophile; for glutamine hydrolysis is C380. Residues 381-384 (FGMQ), E404, and R469 each bind L-glutamine. Catalysis depends on residues H514 and E516.

This sequence belongs to the CTP synthase family. In terms of assembly, homotetramer.

It catalyses the reaction UTP + L-glutamine + ATP + H2O = CTP + L-glutamate + ADP + phosphate + 2 H(+). The enzyme catalyses L-glutamine + H2O = L-glutamate + NH4(+). The catalysed reaction is UTP + NH4(+) + ATP = CTP + ADP + phosphate + 2 H(+). Its pathway is pyrimidine metabolism; CTP biosynthesis via de novo pathway; CTP from UDP: step 2/2. With respect to regulation, allosterically activated by GTP, when glutamine is the substrate; GTP has no effect on the reaction when ammonia is the substrate. The allosteric effector GTP functions by stabilizing the protein conformation that binds the tetrahedral intermediate(s) formed during glutamine hydrolysis. Inhibited by the product CTP, via allosteric rather than competitive inhibition. Catalyzes the ATP-dependent amination of UTP to CTP with either L-glutamine or ammonia as the source of nitrogen. Regulates intracellular CTP levels through interactions with the four ribonucleotide triphosphates. The polypeptide is CTP synthase (Brucella abortus (strain 2308)).